A 428-amino-acid polypeptide reads, in one-letter code: Enolase (428 aa).

Gln-163 contacts (2R)-2-phosphoglycerate. Residue Glu-205 is the Proton donor of the active site. 3 residues coordinate Mg(2+): Asp-242, Glu-285, and Asp-312. The (2R)-2-phosphoglycerate site is built by Lys-337, Arg-366, Ser-367, and Lys-388. The active-site Proton acceptor is the Lys-337.

Belongs to the enolase family. It depends on Mg(2+) as a cofactor.

The protein localises to the cytoplasm. Its subcellular location is the secreted. It localises to the cell surface. The enzyme catalyses (2R)-2-phosphoglycerate = phosphoenolpyruvate + H2O. It functions in the pathway carbohydrate degradation; glycolysis; pyruvate from D-glyceraldehyde 3-phosphate: step 4/5. Its function is as follows. Catalyzes the reversible conversion of 2-phosphoglycerate (2-PG) into phosphoenolpyruvate (PEP). It is essential for the degradation of carbohydrates via glycolysis. The sequence is that of Enolase from Neisseria meningitidis serogroup A / serotype 4A (strain DSM 15465 / Z2491).